The following is a 242-amino-acid chain: Uridylate kinase (242 aa).

Lys-11 to Gly-14 is an ATP binding site. The tract at residues Gly-19–Gly-24 is involved in allosteric activation by GTP. UMP is bound at residue Gly-53. Gly-54 and Arg-58 together coordinate ATP. Residues Asp-73 and Ile-134–Thr-141 each bind UMP. Residues Asn-162, Tyr-168, and Asp-171 each contribute to the ATP site.

Belongs to the UMP kinase family. Homohexamer.

The protein resides in the cytoplasm. It carries out the reaction UMP + ATP = UDP + ADP. The protein operates within pyrimidine metabolism; CTP biosynthesis via de novo pathway; UDP from UMP (UMPK route): step 1/1. With respect to regulation, allosterically activated by GTP. Inhibited by UTP. In terms of biological role, catalyzes the reversible phosphorylation of UMP to UDP. This Streptococcus pyogenes serotype M1 protein is Uridylate kinase.